The following is a 125-amino-acid chain: Histone H1-like protein Hc1 (125 aa).

Residues 98 to 125 (TKAKVKPTKKAAPKTKVKTAKKTRSTKK) are disordered. A compositionally biased stretch (basic residues) spans 100 to 125 (AKVKPTKKAAPKTKVKTAKKTRSTKK).

This sequence belongs to the histone H1/H5 family. HCT subfamily.

Might have a role analogous to that of eukaryotic histone proteins. The chain is Histone H1-like protein Hc1 (hctA) from Chlamydia trachomatis serovar L2 (strain ATCC VR-902B / DSM 19102 / 434/Bu).